Consider the following 424-residue polypeptide: Tyrosine--tRNA ligase (424 aa).

Tyrosine 37 contributes to the L-tyrosine binding site. The short motif at 42 to 51 is the 'HIGH' region element; it reads PTADSLHLGH. Lysine 144 is subject to N6-acetyllysine. L-tyrosine contacts are provided by tyrosine 175 and glutamine 179. The short motif at 235-239 is the 'KMSKS' region element; that stretch reads KFGKT. ATP is bound at residue lysine 238. One can recognise an S4 RNA-binding domain in the interval 357-414; the sequence is ADLMQALVDSELQPSRGQARKTIASNAVTINGEKQSDPEYFFKEEDRLFGRFTLLRRG.

Belongs to the class-I aminoacyl-tRNA synthetase family. TyrS type 1 subfamily. In terms of assembly, homodimer.

Its subcellular location is the cytoplasm. The catalysed reaction is tRNA(Tyr) + L-tyrosine + ATP = L-tyrosyl-tRNA(Tyr) + AMP + diphosphate + H(+). Functionally, catalyzes the attachment of tyrosine to tRNA(Tyr) in a two-step reaction: tyrosine is first activated by ATP to form Tyr-AMP and then transferred to the acceptor end of tRNA(Tyr). This Escherichia fergusonii (strain ATCC 35469 / DSM 13698 / CCUG 18766 / IAM 14443 / JCM 21226 / LMG 7866 / NBRC 102419 / NCTC 12128 / CDC 0568-73) protein is Tyrosine--tRNA ligase.